Reading from the N-terminus, the 176-residue chain is Pituitary adenylate cyclase-activating polypeptide (176 aa).

Residues 1 to 24 (MTMCSGARLALLVYGIIMHSSVYS) form the signal peptide. Residues 25-79 (SPAAAGLRFPGIRPEEEAYGEDGNPLPDFDGSEPPGAGSPASAPRAAAAWYRPAG) constitute a propeptide that is removed on maturation. The disordered stretch occupies residues 39–68 (EEEAYGEDGNPLPDFDGSEPPGAGSPASAP). The segment covering 56-68 (SEPPGAGSPASAP) has biased composition (low complexity). The important for receptor binding stretch occupies residues 150–158 (VKKYLAAVL). Position 158 is a leucine amide (L158). K169 bears the Lysine amide mark. A propeptide spanning residues 173–176 (IAYL) is cleaved from the precursor.

The protein belongs to the glucagon family.

It is found in the secreted. Its function is as follows. PACAP is a neuropeptide involved in diverse array of physiological processes through activating the PACAP subfamily of class B1 G protein-coupled receptors: VIP receptor 1 (VIPR1), VIP receptor 2 (VIPR2), and PACAP type I receptor (ADCYAP1R1). Exerts neuroprotective and general cytoprotective effects due to anti-apoptotic, anti-inflammatory, and antioxidant actions. Promotes neuron projection development through the RAPGEF2/Rap1/B-Raf/ERK pathway. In chromaffin cells, induces long-lasting increase of intracellular calcium concentrations and neuroendocrine secretion. Involved in the control of glucose homeostasis, induces insulin secretion by pancreatic beta cells. PACAP exists in two bioactive forms from proteolysis of the same precursor protein, PACAP27 and PACAP38, which differ by eleven amino acid residues in the C-terminus. This is Pituitary adenylate cyclase-activating polypeptide from Homo sapiens (Human).